The following is a 553-amino-acid chain: Protein DA1-related 1 (553 aa).

The interval 10 to 41 is disordered; the sequence is GSSHKFSDGQCNGRYREDRNLEGPRYSAEGSD. One can recognise a UIM 1 domain in the interval 42 to 61; it reads FDKEEIECAIALSLSEQEHV. The span at 62 to 77 shows a compositional bias: basic and acidic residues; it reads IPQDDKGKKIIEYKSE. Residues 62-91 are disordered; sequence IPQDDKGKKIIEYKSETEEDDDDDEDEDEE. Positions 78 to 91 are enriched in acidic residues; sequence TEEDDDDDEDEDEE. The UIM 2 domain maps to 87-106; sequence DEDEEYMRAQLEAAEEEERR. One can recognise a UIM 3; degenerate domain in the interval 122-141; that stretch reads AQLEETEKLLAKARLEEEEM. The 20-residue stretch at 149–168 folds into the UIM 4 domain; that stretch reads EEDELLAKALQESMNVGSPP. Serine 166 carries the post-translational modification Phosphoserine. Residues 188 to 248 form the LIM zinc-binding domain; it reads RICVGCQAEI…KLCYKEQHHP (61 aa).

In terms of assembly, interacts with ubiquitin, TCP14 and TCP15. In terms of processing, polyubiquitinated by DA2.

Acts redundantly with DA1 and DAR2 to regulate endoreduplication during leaf development. Together with DA1 and DAR2, modulates the protein stability of the transcription factors TCP14 and TCP15, which repress endoreduplication by directly regulating the expression of cell-cycle genes. In Arabidopsis thaliana (Mouse-ear cress), this protein is Protein DA1-related 1.